The chain runs to 580 residues: Peptide transporter PTR_B (580 aa).

The segment covering 1-30 has biased composition (basic and acidic residues); it reads MSTEKLQNDDKVVDEKYVDADEHSLVRSQD. The tract at residues 1-45 is disordered; the sequence is MSTEKLQNDDKVVDEKYVDADEHSLVRSQDESFPQTEEGGEPTDH. The helical transmembrane segment at 57–78 threads the bilayer; the sequence is IPMSCWLVAIVELSERFTYYGL. Residue N101 is glycosylated (N-linked (GlcNAc...) asparagine). 11 helical membrane passes run 107–127, 134–154, 163–183, 219–239, 249–269, 326–346, 370–390, 402–422, 449–469, 484–504, and 513–533; these read ALSYFWQFWCYVTPIFGAWIA, YFTICIFCIVMMVGIFILFIT, TTSLAGFIVAVIVIGIGTGGI, VSNVFMFFYLMINIGALSVIA, FWAAFLLPLCFFCVGILALVL, ALYACKVFAFYPIYWLVYGQM, INSITLIIFIPICERIVYPFI, IFWGFMFGAAAMVYAGVLQHF, IALQTPCYWLIGMSEIFASIT, SFIMSIFLLMNAFGSALGIAL, and MVWTFNGLGVSCFIAGWIFWF.

It belongs to the major facilitator superfamily. Proton-dependent oligopeptide transporter (POT/PTR) (TC 2.A.17) family.

Its subcellular location is the cell membrane. The enzyme catalyses a dipeptide(out) + H(+)(out) = a dipeptide(in) + H(+)(in). It catalyses the reaction an L-amino acid tripeptide(out) + H(+)(out) = an L-amino acid tripeptide(in) + H(+)(in). In terms of biological role, peptide transporter that exploits the inwardly directed proton motive force to facilitate the cellular uptake of di/tripeptides. Shows strong uptake specificity towards the dipeptides Tyr-Phe and Gly-His, when compared to PTR_A and PTR_C. In Candidozyma auris (Yeast), this protein is Peptide transporter PTR_B.